A 150-amino-acid polypeptide reads, in one-letter code: Small ribosomal subunit protein uS13 (150 aa).

It belongs to the universal ribosomal protein uS13 family. In terms of assembly, part of the 30S ribosomal subunit. Forms a loose heterodimer with protein S19. Forms two bridges to the 50S subunit in the 70S ribosome.

Its function is as follows. Located at the top of the head of the 30S subunit, it contacts several helices of the 16S rRNA. In the 70S ribosome it contacts the 23S rRNA (bridge B1a) and protein L5 of the 50S subunit (bridge B1b), connecting the 2 subunits; these bridges are implicated in subunit movement. The chain is Small ribosomal subunit protein uS13 from Methanocorpusculum labreanum (strain ATCC 43576 / DSM 4855 / Z).